Reading from the N-terminus, the 421-residue chain is 3-isopropylmalate dehydratase large subunit (421 aa).

[4Fe-4S] cluster is bound by residues Cys-292, Cys-352, and Cys-355.

Belongs to the aconitase/IPM isomerase family. LeuC type 2 subfamily. As to quaternary structure, heterodimer of LeuC and LeuD. It depends on [4Fe-4S] cluster as a cofactor.

The catalysed reaction is (2R,3S)-3-isopropylmalate = (2S)-2-isopropylmalate. The protein operates within amino-acid biosynthesis; L-leucine biosynthesis; L-leucine from 3-methyl-2-oxobutanoate: step 2/4. In terms of biological role, catalyzes the isomerization between 2-isopropylmalate and 3-isopropylmalate, via the formation of 2-isopropylmaleate. In Herpetosiphon aurantiacus (strain ATCC 23779 / DSM 785 / 114-95), this protein is 3-isopropylmalate dehydratase large subunit.